The chain runs to 665 residues: MACMKLGSKSDAFQRQGQAWFCTTGLPSDIVVEVGEMSFHLHKFPLLSRSGVMERRIAEASKEGDDKCLIEISDLPGGDKTFELVAKFCYGVKLELTASNVVYLRCAAEHLEMTEEHGEGNLISQTETFFNQVVLKSWKDSIKALHSCDEVLEYADELNITKKCIESLAMRASTDPNLFGWPVVEHGGPMQSPGGSVLWNGISTGARPKHTSSDWWYEDASMLSFPLFKRLITVMESRGIREDIIAGSLTYYTRKHLPGLKRRRGGPESSGRFSTPLGSGNVLSEEEQKNLLEEIQELLRMQKGLVPTKFFVDMLRIAKILKASPDCIANLEKRIGMQLDQAALEDLVMPSFSHTMETLYDVDSVQRILDHFLGTDQIMPGGVGSPCSSVDDGNLIGSPQSITPMTAVAKLIDGYLAEVAPDVNLKLPKFQALAASIPEYARLLDDGLYRAIDIYLKHHPWLAETERENLCRLLDCQKLSLEACTHAAQNERLPLRIIVQVLFFEQLQLRTSVAGCFLVSDNLDGGSRQLRSGGYVGGPNEGGGGGGGWATAVRENQVLKVGMDSMRMRVCELEKECSNMRQEIEKLGKTTKGGGSASNGVGSKTWENVSKKLGFGFKLKSHQMCSAQEGSVSKSNNENVKIEKLKDVKERRGKHKKASSISSER.

Residues 28–98 form the BTB domain; that stretch reads SDIVVEVGEM…CYGVKLELTA (71 aa). The 295-residue stretch at 214–508 folds into the NPH3 domain; it reads DWWYEDASML…VQVLFFEQLQ (295 aa). The segment at 260-280 is disordered; it reads LKRRRGGPESSGRFSTPLGSG. Residues 271 to 280 show a composition bias toward polar residues; the sequence is GRFSTPLGSG. The residue at position 279 (Ser279) is a Phosphoserine. Residues 281–306 are a coiled coil; that stretch reads NVLSEEEQKNLLEEIQELLRMQKGLV. The residue at position 449 (Tyr449) is a Phosphotyrosine. A compositionally biased stretch (polar residues) spans 626 to 639; the sequence is SAQEGSVSKSNNEN. The interval 626–665 is disordered; it reads SAQEGSVSKSNNENVKIEKLKDVKERRGKHKKASSISSER. The span at 640-650 shows a compositional bias: basic and acidic residues; it reads VKIEKLKDVKE.

Belongs to the NPH3 family.

The protein operates within protein modification; protein ubiquitination. Its function is as follows. May act as a substrate-specific adapter of an E3 ubiquitin-protein ligase complex (CUL3-RBX1-BTB) which mediates the ubiquitination and subsequent proteasomal degradation of target proteins. The chain is BTB/POZ domain-containing protein At1g30440 from Arabidopsis thaliana (Mouse-ear cress).